We begin with the raw amino-acid sequence, 231 residues long: Large ribosomal subunit protein uL1 (231 aa).

The protein belongs to the universal ribosomal protein uL1 family. As to quaternary structure, part of the 50S ribosomal subunit.

In terms of biological role, binds directly to 23S rRNA. The L1 stalk is quite mobile in the ribosome, and is involved in E site tRNA release. Functionally, protein L1 is also a translational repressor protein, it controls the translation of the L11 operon by binding to its mRNA. This chain is Large ribosomal subunit protein uL1, found in Macrococcus caseolyticus (strain JCSC5402) (Macrococcoides caseolyticum).